The following is a 573-amino-acid chain: E3 ubiquitin-protein ligase RNF168 (573 aa).

The RING-type zinc finger occupies 16-55; the sequence is CQICVEILFEPVTLPCNHTLCKPCFESTVEKASLCCPFCR. Position 70 is a phosphoserine (S70). Residues 110–128 carry the LR motif 1 motif; it reads LSKPGELRREYEEEISKVE. The UMI motif motif lies at 143–151; it reads EEYIQKLLA. Disordered regions lie at residues 153-174 and 196-277; these read EEEEEKRQAEKRHREMEEQLKS and ASPL…EDMP. Residues 157–174 show a composition bias toward basic and acidic residues; it reads EKRQAEKRHREMEEQLKS. An MIU motif 1 motif is present at residues 168-191; the sequence is MEEQLKSDEELARRLSLDINNFCE. Residue S197 is modified to Phosphoserine. K210 is covalently cross-linked (Glycyl lysine isopeptide (Lys-Gly) (interchain with G-Cter in SUMO2)). Residues 231–243 are compositionally biased toward polar residues; it reads PKSQLGSASQSEV. Over residues 245–261 the composition is skewed to basic and acidic residues; sequence QEDRKSSMSKKIDDNSD. T363 is modified (phosphothreonine). S416 bears the Phosphoserine mark. The short motif at 440-463 is the MIU motif 2 element; it reads RHKQEKQDRLLALQLQEEVDQEQM. The interval 456–528 is disordered; that stretch reads EEVDQEQMRP…NHQQPSFKIQ (73 aa). Residues 461-470 show a composition bias toward basic and acidic residues; it reads EQMRPDRQKG. Positions 467 to 478 match the LR motif 2 motif; that stretch reads RQKGSPDGYQLR. S471 is modified (phosphoserine). Residues 494-519 are compositionally biased toward basic and acidic residues; the sequence is NSRDRNSKRQTELEQPKPRTDSKNEN. Residue K530 forms a Glycyl lysine isopeptide (Lys-Gly) (interchain with G-Cter in SUMO2) linkage. Residues 540-573 are disordered; it reads NSTNDNCNVSKTAHSLQPSKSQKSIFQMFQRVTK.

This sequence belongs to the RNF168 family. Monomer. Interacts with UBE2N/UBC13. Sumoylated with SUMO1 by PIAS4 in response to double-strand breaks (DSBs). In terms of processing, ubiquitinated.

It localises to the nucleus. The catalysed reaction is S-ubiquitinyl-[E2 ubiquitin-conjugating enzyme]-L-cysteine + [acceptor protein]-L-lysine = [E2 ubiquitin-conjugating enzyme]-L-cysteine + N(6)-ubiquitinyl-[acceptor protein]-L-lysine.. It participates in protein modification; protein ubiquitination. Its function is as follows. E3 ubiquitin-protein ligase required for accumulation of repair proteins to sites of DNA damage. Acts with UBE2N/UBC13 to amplify the RNF8-dependent histone ubiquitination. Recruited to sites of DNA damage at double-strand breaks (DSBs) by binding to ubiquitinated histone H2A and H2AX and amplifies the RNF8-dependent H2A ubiquitination, promoting the formation of 'Lys-63'-linked ubiquitin conjugates. This leads to concentrate ubiquitinated histones H2A and H2AX at DNA lesions to the threshold required for recruitment of TP53BP1 and BRCA1. Also recruited at DNA interstrand cross-links (ICLs) sites and promotes accumulation of 'Lys-63'-linked ubiquitination of histones H2A and H2AX, leading to recruitment of FAAP20 and Fanconi anemia (FA) complex, followed by interstrand cross-link repair. H2A ubiquitination also mediates the ATM-dependent transcriptional silencing at regions flanking DSBs in cis, a mechanism to avoid collision between transcription and repair intermediates. Also involved in class switch recombination in immune system, via its role in regulation of DSBs repair. Following DNA damage, promotes the ubiquitination and degradation of JMJD2A/KDM4A in collaboration with RNF8, leading to unmask H4K20me2 mark and promote the recruitment of TP53BP1 at DNA damage sites. Not able to initiate 'Lys-63'-linked ubiquitination in vitro; possibly due to partial occlusion of the UBE2N/UBC13-binding region. Catalyzes monoubiquitination of 'Lys-13' and 'Lys-15' of nucleosomal histone H2A (H2AK13Ub and H2AK15Ub, respectively). The protein is E3 ubiquitin-protein ligase RNF168 of Bos taurus (Bovine).